Here is a 445-residue protein sequence, read N- to C-terminus: C4-dicarboxylate transport protein 2 (445 aa).

The next 8 helical transmembrane spans lie at 24 to 44 (ILYV…WLFP), 62 to 82 (LIKM…IAHI), 96 to 116 (LVYF…VGNL), 163 to 183 (GDIL…MALG), 201 to 221 (FGVI…AMAF), 237 to 257 (LIAL…GLIA), 334 to 354 (ALGV…AMLT), and 366 to 386 (FITL…GMAI).

Belongs to the dicarboxylate/amino acid:cation symporter (DAACS) (TC 2.A.23) family.

It is found in the cell inner membrane. In terms of biological role, responsible for the transport of dicarboxylates such as succinate, fumarate, and malate from the periplasm across the membrane. This Bradyrhizobium sp. (strain ORS 278) protein is C4-dicarboxylate transport protein 2.